The sequence spans 298 residues: Nucleotide-binding protein Dred_3054 (298 aa).

Residue 20–27 participates in ATP binding; that stretch reads GMSGAGKT. 71-74 lines the GTP pocket; the sequence is DIRG.

Belongs to the RapZ-like family.

Its function is as follows. Displays ATPase and GTPase activities. This Desulforamulus reducens (strain ATCC BAA-1160 / DSM 100696 / MI-1) (Desulfotomaculum reducens) protein is Nucleotide-binding protein Dred_3054.